The sequence spans 124 residues: Chemotaxis protein CheY1 (124 aa).

A Response regulatory domain is found at 2-120 (KLLVVDDSST…VLKEKLEVVL (119 aa)). Aspartate 7, aspartate 8, aspartate 53, and asparagine 55 together coordinate Mg(2+). A 4-aspartylphosphate modification is found at aspartate 53.

Interacts (when phosphorylated) with FliM. It depends on Mg(2+) as a cofactor. Post-translationally, phosphorylated by CheAY. Dephosphorylated (inactivated) by CheZ.

The protein resides in the cytoplasm. Chemotactic response regulator protein that modulates the rotation direction of bacterial flagellar motors. Plays an important role in the colonization and infection of Helicobacter pylori. Upon phosphorylation by CheA, interacts with the flagellar motor protein FliM to cause clockwise flagellar rotation and bacterial reversals, as opposed to straight swimming when CheY1 is not phosphorylated. In Helicobacter pylori (strain J99 / ATCC 700824) (Campylobacter pylori J99), this protein is Chemotaxis protein CheY1 (cheY1).